A 318-amino-acid chain; its full sequence is uncharacterized protein (318 aa).

A coiled-coil region spans residues Leu-67–Glu-157. A disordered region spans residues Glu-172 to Leu-318. 2 stretches are compositionally biased toward basic and acidic residues: residues Asn-175–Lys-193 and Lys-219–Ser-236. Residues Val-237 to Thr-248 are compositionally biased toward polar residues. Composition is skewed to basic and acidic residues over residues Ser-249–Ala-274 and Ser-300–Gly-310.

This is an uncharacterized protein from Staphylococcus aureus (strain Mu50 / ATCC 700699).